Reading from the N-terminus, the 329-residue chain is Putative GTPase Obg (329 aa).

An Obg domain is found at 1–159 (MQFIDQARIM…WPLQLELKLL (159 aa)). An OBG-type G domain is found at 160–328 (AEVGIIGLPN…LKTQIWQQLG (169 aa)). GTP is bound by residues 166-173 (GLPNAGKS), 191-195 (FTTLI), 213-216 (DIPG), 280-283 (SKIE), and 309-311 (SSA). Mg(2+) contacts are provided by Ser-173 and Thr-193.

Belongs to the TRAFAC class OBG-HflX-like GTPase superfamily. OBG GTPase family. Monomer. The cofactor is Mg(2+).

The protein localises to the plastid. It localises to the organellar chromatophore. An essential GTPase which binds GTP, GDP and possibly (p)ppGpp with moderate affinity, with high nucleotide exchange rates and a fairly low GTP hydrolysis rate. The sequence is that of Putative GTPase Obg from Paulinella chromatophora.